Here is a 339-residue protein sequence, read N- to C-terminus: MEILLQKVYDQENLSKEEMTMIATEIFEGRLSKTKIAAFLMALKVKGETAEEMAGIAQAMQQVAIQVAFPAGTAMDNCGTGGDKSNSFNISTTSAFVLAAAGIPVAKHGNRSISSRSGSADVCQELGIDINMRPEDMTYLLEKVGIAFLFAPHVHPNMKYVMDVRKELGTPTIFNLIGPLTNPVHLETQLMGIYRRDLLEQTAEVLGQLGRKRAVVLNGAGFMDEASLAGENHYALYENGEVHLYTLRPEDVGLTSYPLEAITGGDAKENAAILRSVLDGEPGAYLDTVLLNAGFGLFANGKVATVQEGVDLARDLIRSGLAKQKLADLITYQKEVLAK.

5-phospho-alpha-D-ribose 1-diphosphate-binding positions include Gly-79, 82 to 83 (GD), Ser-87, 89 to 92 (NIST), 107 to 115 (KHGNRSISS), and Ser-119. Gly-79 contributes to the anthranilate binding site. Position 91 (Ser-91) interacts with Mg(2+). Residue Asn-110 coordinates anthranilate. Arg-165 contacts anthranilate. Mg(2+) contacts are provided by Asp-224 and Glu-225.

Belongs to the anthranilate phosphoribosyltransferase family. As to quaternary structure, homodimer. Mg(2+) is required as a cofactor.

It carries out the reaction N-(5-phospho-beta-D-ribosyl)anthranilate + diphosphate = 5-phospho-alpha-D-ribose 1-diphosphate + anthranilate. It participates in amino-acid biosynthesis; L-tryptophan biosynthesis; L-tryptophan from chorismate: step 2/5. Functionally, catalyzes the transfer of the phosphoribosyl group of 5-phosphorylribose-1-pyrophosphate (PRPP) to anthranilate to yield N-(5'-phosphoribosyl)-anthranilate (PRA). In Listeria monocytogenes serotype 4a (strain HCC23), this protein is Anthranilate phosphoribosyltransferase.